Here is a 63-residue protein sequence, read N- to C-terminus: Large ribosomal subunit protein uL30 (63 aa).

The protein belongs to the universal ribosomal protein uL30 family. In terms of assembly, part of the 50S ribosomal subunit.

The polypeptide is Large ribosomal subunit protein uL30 (Xanthomonas axonopodis pv. citri (strain 306)).